Consider the following 318-residue polypeptide: Ribosomal RNA small subunit methyltransferase H (318 aa).

S-adenosyl-L-methionine contacts are provided by residues glycine 33–histidine 35, aspartate 53, phenylalanine 80, aspartate 101, and glutamine 108.

It belongs to the methyltransferase superfamily. RsmH family.

The protein localises to the cytoplasm. It carries out the reaction cytidine(1402) in 16S rRNA + S-adenosyl-L-methionine = N(4)-methylcytidine(1402) in 16S rRNA + S-adenosyl-L-homocysteine + H(+). In terms of biological role, specifically methylates the N4 position of cytidine in position 1402 (C1402) of 16S rRNA. This chain is Ribosomal RNA small subunit methyltransferase H, found in Symbiobacterium thermophilum (strain DSM 24528 / JCM 14929 / IAM 14863 / T).